A 544-amino-acid chain; its full sequence is Chaperonin GroEL 2 (544 aa).

Residues T29–P32, D86–T90, G413, N479–A481, and D495 contribute to the ATP site.

The protein belongs to the chaperonin (HSP60) family. Forms a cylinder of 14 subunits composed of two heptameric rings stacked back-to-back. Interacts with the co-chaperonin GroES.

It localises to the cytoplasm. It carries out the reaction ATP + H2O + a folded polypeptide = ADP + phosphate + an unfolded polypeptide.. Functionally, together with its co-chaperonin GroES, plays an essential role in assisting protein folding. The GroEL-GroES system forms a nano-cage that allows encapsulation of the non-native substrate proteins and provides a physical environment optimized to promote and accelerate protein folding. The protein is Chaperonin GroEL 2 of Synechococcus sp. (strain WH7803).